A 613-amino-acid chain; its full sequence is Methionine--tRNA ligase (613 aa).

Positions 15–25 (PYANGPRHIGH) match the 'HIGH' region motif. The Zn(2+) site is built by cysteine 147, cysteine 150, cysteine 160, and cysteine 163. Positions 351–355 (KFSSS) match the 'KMSKS' region motif. ATP is bound at residue serine 354.

Belongs to the class-I aminoacyl-tRNA synthetase family. MetG type 1 subfamily. Monomer. Requires Zn(2+) as cofactor.

It localises to the cytoplasm. It catalyses the reaction tRNA(Met) + L-methionine + ATP = L-methionyl-tRNA(Met) + AMP + diphosphate. Is required not only for elongation of protein synthesis but also for the initiation of all mRNA translation through initiator tRNA(fMet) aminoacylation. The polypeptide is Methionine--tRNA ligase (Corynebacterium efficiens (strain DSM 44549 / YS-314 / AJ 12310 / JCM 11189 / NBRC 100395)).